The chain runs to 308 residues: Oxygen-dependent coproporphyrinogen-III oxidase (308 aa).

Serine 100 serves as a coordination point for substrate. Residues histidine 104 and histidine 114 each coordinate a divalent metal cation. The active-site Proton donor is histidine 114. 116-118 (NFR) provides a ligand contact to substrate. Residues histidine 153 and histidine 183 each coordinate a divalent metal cation. The segment at 248–283 (YVEFNLVFDRGTIFGLQSGGRTESILSSMPPMATWK) is important for dimerization. 266–268 (GGR) contributes to the substrate binding site.

Belongs to the aerobic coproporphyrinogen-III oxidase family. As to quaternary structure, homodimer. Requires a divalent metal cation as cofactor.

Its subcellular location is the cytoplasm. It carries out the reaction coproporphyrinogen III + O2 + 2 H(+) = protoporphyrinogen IX + 2 CO2 + 2 H2O. Its pathway is porphyrin-containing compound metabolism; protoporphyrin-IX biosynthesis; protoporphyrinogen-IX from coproporphyrinogen-III (O2 route): step 1/1. Functionally, involved in the heme biosynthesis. Catalyzes the aerobic oxidative decarboxylation of propionate groups of rings A and B of coproporphyrinogen-III to yield the vinyl groups in protoporphyrinogen-IX. The chain is Oxygen-dependent coproporphyrinogen-III oxidase from Francisella tularensis subsp. holarctica (strain FTNF002-00 / FTA).